We begin with the raw amino-acid sequence, 435 residues long: Gap junction alpha-3 protein (435 aa).

Residues 2–15 lie within the membrane without spanning it; it reads GDWSFLGRLLENAQ. At 16–19 the chain is on the cytoplasmic side; sequence EHST. Residues 20-40 form a helical membrane-spanning segment; the sequence is VIGKVWLTVLFIFRILVLGAA. Residues 41–71 are Extracellular-facing; it reads AEDVWGDEQSDFTCNTQQPGCENVCYDRAFP. 3 disulfide bridges follow: cysteine 54/cysteine 192, cysteine 61/cysteine 186, and cysteine 65/cysteine 181. The chain crosses the membrane as a helical span at residues 72 to 92; the sequence is ISHIRFWALQIIFVSTPTLIY. The Cytoplasmic segment spans residues 93–152; sequence LGHVLHIVRMEEKKKEREEEEQLKRESPSPKEPPQDNPSSRDDRGRVRMAGALLRTYVFN. Positions 108-121 are enriched in basic and acidic residues; the sequence is EREEEEQLKRESPS. The disordered stretch occupies residues 108–136; that stretch reads EREEEEQLKRESPSPKEPPQDNPSSRDDR. The helical transmembrane segment at 153–173 threads the bilayer; sequence IIFKTLFEVGFIAGQYFLYGF. The Extracellular portion of the chain corresponds to 174–201; that stretch reads ELKPLYRCDRWPCPNTVDCFISRPTEKT. Residues 202–222 form a helical membrane-spanning segment; it reads IFIIFMLAVACASLLLNMLEI. Residues 223-435 are Cytoplasmic-facing; sequence YHLGWKKLKQ…GRARPEDLAI (213 aa). A disordered region spans residues 332 to 435; that stretch reads AAERQPPALK…GRARPEDLAI (104 aa). 2 stretches are compositionally biased toward low complexity: residues 342-389 and 415-427; these read AYPA…ALAG and GRAS…SSGR.

It belongs to the connexin family. Alpha-type (group II) subfamily. As to quaternary structure, a hemichannel or connexon is composed of a hexamer of connexins. A functional gap junction is formed by the apposition of two hemichannels. Forms heteromeric channels with GJA8.

The protein resides in the cell membrane. It localises to the cell junction. It is found in the gap junction. Its function is as follows. Structural component of lens fiber gap junctions. Gap junctions are dodecameric channels that connect the cytoplasm of adjoining cells. They are formed by the docking of two hexameric hemichannels, one from each cell membrane. Small molecules and ions diffuse from one cell to a neighboring cell via the central pore. The protein is Gap junction alpha-3 protein (GJA3) of Homo sapiens (Human).